The sequence spans 396 residues: Elongation factor Tu (396 aa).

The tr-type G domain maps to 10–206 (KPHVNVGTIG…ALDSYIPEPV (197 aa)). Residues 19-26 (GHIDHGKT) form a G1 region. 19 to 26 (GHIDHGKT) lines the GTP pocket. A Mg(2+)-binding site is contributed by Thr-26. The G2 stretch occupies residues 60 to 64 (TKTVT). The segment at 83–86 (DCPG) is G3. GTP is bound by residues 83–87 (DCPGH) and 138–141 (NKCD). The G4 stretch occupies residues 138-141 (NKCD). The G5 stretch occupies residues 176–178 (ASL).

Belongs to the TRAFAC class translation factor GTPase superfamily. Classic translation factor GTPase family. EF-Tu/EF-1A subfamily. Monomer.

It is found in the cytoplasm. The catalysed reaction is GTP + H2O = GDP + phosphate + H(+). GTP hydrolase that promotes the GTP-dependent binding of aminoacyl-tRNA to the A-site of ribosomes during protein biosynthesis. This chain is Elongation factor Tu, found in Sorangium cellulosum (strain So ce56) (Polyangium cellulosum (strain So ce56)).